Reading from the N-terminus, the 240-residue chain is Uridylate kinase (240 aa).

12 to 15 is a binding site for ATP; it reads KLSG. Residues 20–25 are involved in allosteric activation by GTP; sequence GDKGFG. G54 is a binding site for UMP. G55 and R59 together coordinate ATP. UMP is bound by residues D74 and 135-142; that span reads TGSPYFST. The ATP site is built by N163, Y169, and D172.

It belongs to the UMP kinase family. Homohexamer.

It localises to the cytoplasm. It catalyses the reaction UMP + ATP = UDP + ADP. The protein operates within pyrimidine metabolism; CTP biosynthesis via de novo pathway; UDP from UMP (UMPK route): step 1/1. Its activity is regulated as follows. Allosterically activated by GTP. Inhibited by UTP. In terms of biological role, catalyzes the reversible phosphorylation of UMP to UDP. This Limosilactobacillus reuteri (strain DSM 20016) (Lactobacillus reuteri) protein is Uridylate kinase.